Here is a 388-residue protein sequence, read N- to C-terminus: Succinate--CoA ligase [ADP-forming] subunit beta (388 aa).

Residues 9–244 enclose the ATP-grasp domain; it reads KALFAEYGLP…PSQDDAREAH (236 aa). ATP contacts are provided by residues K46, 53-55, E99, T102, and E107; that span reads GRG. The Mg(2+) site is built by N199 and D213. Residues N264 and 321 to 323 each bind substrate; that span reads GIV.

It belongs to the succinate/malate CoA ligase beta subunit family. Heterotetramer of two alpha and two beta subunits. It depends on Mg(2+) as a cofactor.

The catalysed reaction is succinate + ATP + CoA = succinyl-CoA + ADP + phosphate. It catalyses the reaction GTP + succinate + CoA = succinyl-CoA + GDP + phosphate. It functions in the pathway carbohydrate metabolism; tricarboxylic acid cycle; succinate from succinyl-CoA (ligase route): step 1/1. Functionally, succinyl-CoA synthetase functions in the citric acid cycle (TCA), coupling the hydrolysis of succinyl-CoA to the synthesis of either ATP or GTP and thus represents the only step of substrate-level phosphorylation in the TCA. The beta subunit provides nucleotide specificity of the enzyme and binds the substrate succinate, while the binding sites for coenzyme A and phosphate are found in the alpha subunit. This is Succinate--CoA ligase [ADP-forming] subunit beta from Shewanella sediminis (strain HAW-EB3).